The primary structure comprises 233 residues: tRNA pseudouridine synthase B (233 aa).

The Nucleophile role is filled by D48.

It belongs to the pseudouridine synthase TruB family. Type 1 subfamily.

The enzyme catalyses uridine(55) in tRNA = pseudouridine(55) in tRNA. Responsible for synthesis of pseudouridine from uracil-55 in the psi GC loop of transfer RNAs. In Bacteroides fragilis (strain ATCC 25285 / DSM 2151 / CCUG 4856 / JCM 11019 / LMG 10263 / NCTC 9343 / Onslow / VPI 2553 / EN-2), this protein is tRNA pseudouridine synthase B.